The following is a 42-amino-acid chain: Photosystem II reaction center protein J (42 aa).

The helical transmembrane segment at isoleucine 10 to phenylalanine 30 threads the bilayer.

The protein belongs to the PsbJ family. In terms of assembly, PSII is composed of 1 copy each of membrane proteins PsbA, PsbB, PsbC, PsbD, PsbE, PsbF, PsbH, PsbI, PsbJ, PsbK, PsbL, PsbM, PsbT, PsbX, PsbY, PsbZ, Psb30/Ycf12, at least 3 peripheral proteins of the oxygen-evolving complex and a large number of cofactors. It forms dimeric complexes.

It localises to the plastid. The protein resides in the chloroplast thylakoid membrane. Functionally, one of the components of the core complex of photosystem II (PSII). PSII is a light-driven water:plastoquinone oxidoreductase that uses light energy to abstract electrons from H(2)O, generating O(2) and a proton gradient subsequently used for ATP formation. It consists of a core antenna complex that captures photons, and an electron transfer chain that converts photonic excitation into a charge separation. The protein is Photosystem II reaction center protein J of Chaetosphaeridium globosum (Charophycean green alga).